The sequence spans 356 residues: 3-isopropylmalate dehydrogenase (356 aa).

Residues Arg-91, Arg-101, Arg-129, and Asp-223 each coordinate substrate. Mg(2+)-binding residues include Asp-223, Asp-247, and Asp-251. 281-293 lines the NAD(+) pocket; it reads GSAPDIAGKGIAN.

The protein belongs to the isocitrate and isopropylmalate dehydrogenases family. LeuB type 1 subfamily. Homodimer. Mg(2+) serves as cofactor. It depends on Mn(2+) as a cofactor.

It is found in the cytoplasm. It catalyses the reaction (2R,3S)-3-isopropylmalate + NAD(+) = 4-methyl-2-oxopentanoate + CO2 + NADH. It functions in the pathway amino-acid biosynthesis; L-leucine biosynthesis; L-leucine from 3-methyl-2-oxobutanoate: step 3/4. Functionally, catalyzes the oxidation of 3-carboxy-2-hydroxy-4-methylpentanoate (3-isopropylmalate) to 3-carboxy-4-methyl-2-oxopentanoate. The product decarboxylates to 4-methyl-2 oxopentanoate. The protein is 3-isopropylmalate dehydrogenase of Ralstonia nicotianae (strain ATCC BAA-1114 / GMI1000) (Ralstonia solanacearum).